We begin with the raw amino-acid sequence, 408 residues long: Phosphoenolpyruvate/phosphate translocator 1, chloroplastic (408 aa).

A chloroplast-targeting transit peptide spans 1–66; sequence MQSAAAVGLL…ISARRIGLVP (66 aa). The next 7 membrane-spanning stretches (helical) occupy residues 105-125, 139-159, 165-185, 222-242, 245-262, 283-303, and 375-395; these read TLQL…FNIY, ITNV…ITGI, ISGA…MGNL, PTPF…LASL, ASFN…NVTF, ITLF…VTLL, and TPVS…VFLY. An EamA domain is found at 124-241; it reads IYNKQVLKVF…PIVGGVALAS (118 aa).

It belongs to the TPT transporter family. PPT (TC 2.A.7.9) subfamily.

It is found in the plastid. Its subcellular location is the chloroplast membrane. Functionally, phosphoenolpyruvate/phosphate translocator that transports phosphoenolpyruvate (PEP) and dihydroxyacetone phosphate. In Oryza sativa subsp. japonica (Rice), this protein is Phosphoenolpyruvate/phosphate translocator 1, chloroplastic (PPT1).